Consider the following 141-residue polypeptide: VLSAADKTNVKSAWDKLGGHGAEYGAEALGRMFLSFPTTKTYPFHFDLSHGSAQPQGHGKKVAEALATAAGHLDDLPGALSALSDLHAHKLRVDPVNFKLLSHCLLVTLAAHMPAEFTPAVHASLDKFLASVSTVLTSKYR.

The Globin domain occupies 1-141; the sequence is VLSAADKTNV…VSTVLTSKYR (141 aa). S3 is modified (phosphoserine). Position 7 is an N6-succinyllysine (K7). T8 is subject to Phosphothreonine. K11 carries the post-translational modification N6-succinyllysine. N6-acetyllysine; alternate is present on K16. Position 16 is an N6-succinyllysine; alternate (K16). The residue at position 24 (Y24) is a Phosphotyrosine. The residue at position 35 (S35) is a Phosphoserine. Position 40 is an N6-succinyllysine (K40). Position 49 is a phosphoserine (S49). Position 58 (H58) interacts with O2. H87 lines the heme b pocket. S102 is subject to Phosphoserine. T108 bears the Phosphothreonine mark. A phosphoserine mark is found at S124 and S131. Phosphothreonine occurs at positions 134 and 137. Position 138 is a phosphoserine (S138).

It belongs to the globin family. Heterotetramer of two alpha chains and two beta chains. In terms of tissue distribution, red blood cells.

Its function is as follows. Involved in oxygen transport from the lung to the various peripheral tissues. The protein is Hemoglobin subunit alpha of Tamiasciurus hudsonicus (American red squirrel).